A 73-amino-acid polypeptide reads, in one-letter code: Toxin Td3 (73 aa).

Residues isoleucine 1–cysteine 7 form the signal peptide. Residues lysine 8–glycine 70 enclose the LCN-type CS-alpha/beta domain. Intrachain disulfides connect cysteine 18-cysteine 69, cysteine 22-cysteine 44, cysteine 30-cysteine 50, and cysteine 34-cysteine 52. Lysine amide is present on lysine 71.

It belongs to the long (4 C-C) scorpion toxin superfamily. Sodium channel inhibitor family. Beta subfamily. Expressed by the venom gland.

Its subcellular location is the secreted. In terms of biological role, beta toxins bind voltage-independently at site-4 of sodium channels (Nav) and shift the voltage of activation toward more negative potentials thereby affecting sodium channel activation and promoting spontaneous and repetitive firing. This chain is Toxin Td3, found in Tityus discrepans (Venezuelan scorpion).